We begin with the raw amino-acid sequence, 386 residues long: Succinate--CoA ligase [ADP-forming] subunit beta (386 aa).

One can recognise an ATP-grasp domain in the interval 9 to 244 (KELLRDYGVP…LNEEDEKEIE (236 aa)). ATP-binding positions include K46, 53 to 55 (GRG), E99, C102, and E107. Mg(2+) contacts are provided by N199 and D213. Substrate contacts are provided by residues N264 and 321-323 (GIM).

This sequence belongs to the succinate/malate CoA ligase beta subunit family. Heterotetramer of two alpha and two beta subunits. Mg(2+) serves as cofactor.

The enzyme catalyses succinate + ATP + CoA = succinyl-CoA + ADP + phosphate. The catalysed reaction is GTP + succinate + CoA = succinyl-CoA + GDP + phosphate. It participates in carbohydrate metabolism; tricarboxylic acid cycle; succinate from succinyl-CoA (ligase route): step 1/1. Functionally, succinyl-CoA synthetase functions in the citric acid cycle (TCA), coupling the hydrolysis of succinyl-CoA to the synthesis of either ATP or GTP and thus represents the only step of substrate-level phosphorylation in the TCA. The beta subunit provides nucleotide specificity of the enzyme and binds the substrate succinate, while the binding sites for coenzyme A and phosphate are found in the alpha subunit. This Alkaliphilus oremlandii (strain OhILAs) (Clostridium oremlandii (strain OhILAs)) protein is Succinate--CoA ligase [ADP-forming] subunit beta.